The sequence spans 303 residues: ASC1-like protein (303 aa).

A run of 6 helical transmembrane segments spans residues 19 to 39 (YEDF…RFLL), 81 to 101 (CIYF…EPWF), 127 to 147 (ALYM…IFWE), 153 to 173 (FGVS…SYNI), 212 to 232 (YLCL…VLWS), and 255 to 275 (YIFN…WVLI). The 213-residue stretch at 72–284 (RKFKESAWKC…IYRMLVKQIQ (213 aa)) folds into the TLC domain.

It localises to the endoplasmic reticulum membrane. Its function is as follows. Mediates resistance to sphinganine-analog mycotoxins (SAMs) by restoring the sphingolipid biosynthesis. Could salvage the transport of GPI-anchored proteins from the endoplasmic reticulum to the Golgi apparatus in ceramides-depleted cells after SAM exposure. In Solanum lycopersicum (Tomato), this protein is ASC1-like protein.